A 330-amino-acid polypeptide reads, in one-letter code: MRCCHICKLPGRVMGIRVLRLSLVVILVLLLVAGALTALLPSVKEDKMLMLRREIKSQGKSTMDSFTLIMQTYNRTDLLLKLLNHYQAVPNLHKVIVVWNNIGEKAPDELWNSLGPHPIPVIFKQQTANRMRNRLQVFPELETNAVLMVDDDTLISTPDLVFAFSVWQQFPDQIVGFVPRKHVSTSSGIYSYGSFEMQAPGSGNGDQYSMVLIGASFFNSKYLELFQRQPAAVHALIDDTQNCDDIAMNFIIAKHIGKTSGIFVKPVNMDNLEKETNSGYSGMWHRAEHALQRSYCINKLVNIYDSMPLRYSNIMISQFGFPYANYKRKI.

The Cytoplasmic segment spans residues 1–22 (MRCCHICKLPGRVMGIRVLRLS). A helical; Signal-anchor for type II membrane protein transmembrane segment spans residues 23–43 (LVVILVLLLVAGALTALLPSV). At 44–330 (KEDKMLMLRR…FPYANYKRKI (287 aa)) the chain is on the lumenal side. Gln-71 serves as a coordination point for UDP-N-acetyl-alpha-D-galactosamine. Gln-71 lines the UDP-N-acetyl-alpha-D-glucosamine pocket. The N-linked (GlcNAc...) asparagine glycan is linked to Asn-74. Residues Arg-75, Asn-100, Asn-129, Arg-134, Asp-150, Asp-151, Asp-152, and Asp-244 each contribute to the UDP-N-acetyl-alpha-D-galactosamine site. UDP-N-acetyl-alpha-D-glucosamine-binding residues include Arg-75, Asn-100, Asn-129, Arg-134, Asp-150, Asp-151, Asp-152, Asp-244, Asp-245, and Arg-293. Position 152 (Asp-152) interacts with Mn(2+). A disulfide bridge connects residues Cys-243 and Cys-296. Asp-245 is an active-site residue. Arg-293 serves as a coordination point for UDP-N-acetyl-alpha-D-galactosamine.

The protein belongs to the glycosyltransferase 47 family. Requires Mn(2+) as cofactor. Post-translationally, the soluble form derives from the membrane form by proteolytic processing. Ubiquitous.

It localises to the endoplasmic reticulum membrane. The protein resides in the secreted. It carries out the reaction 3-O-(beta-D-GlcA-(1-&gt;3)-beta-D-Gal-(1-&gt;3)-beta-D-Gal-(1-&gt;4)-beta-D-Xyl)-L-seryl-[protein] + UDP-N-acetyl-alpha-D-glucosamine = 3-O-(alpha-D-GlcNAc-(1-&gt;4)-beta-D-GlcA-(1-&gt;3)-beta-D-Gal-(1-&gt;3)-beta-D-Gal-(1-&gt;4)-beta-D-Xyl)-L-seryl-[protein] + UDP + H(+). The protein operates within glycan metabolism; heparan sulfate biosynthesis. In terms of biological role, glycosyltransferase required for the biosynthesis of heparan-sulfate and responsible for the alternating addition of beta-1-4-linked glucuronic acid (GlcA) and alpha-1-4-linked N-acetylglucosamine (GlcNAc) units to nascent heparan sulfate chains. This is Exostosin-like 2 (EXTL2) from Homo sapiens (Human).